The sequence spans 372 residues: Probable E3 ubiquitin-protein ligase makorin-1 (372 aa).

2 C3H1-type zinc fingers span residues 20–45 (KHVT…HDLT) and 48–75 (KPAA…HCKP). A disordered region spans residues 78–110 (NEEFSSPQMLPPSSPSPSTDPESSQPAPRPKTQ). Residues 93–103 (SPSTDPESSQP) are compositionally biased toward low complexity. Residues 153–180 (ALRKQLCPYAAVGECRYGINCAYLHGDV) form a C3H1-type 3 zinc finger. The tract at residues 181-208 (CDMCGLQVLHPTDNSQRSQHTKACIEAH) is makorin-type Cys-His. The RING-type zinc finger occupies 226 to 280 (CGVCMEVVFEKANPSERRFGILSNCNHCYCLKCIRKWRSAKQFESKIIKSCPECR). The C3H1-type 4 zinc-finger motif lies at 309-338 (GMGRKPCRYFDEGRGICPFGANCFYKHAFP).

The catalysed reaction is S-ubiquitinyl-[E2 ubiquitin-conjugating enzyme]-L-cysteine + [acceptor protein]-L-lysine = [E2 ubiquitin-conjugating enzyme]-L-cysteine + N(6)-ubiquitinyl-[acceptor protein]-L-lysine.. It functions in the pathway protein modification; protein ubiquitination. Functionally, E3 ubiquitin ligase catalyzing the covalent attachment of ubiquitin moieties onto substrate proteins. The protein is Probable E3 ubiquitin-protein ligase makorin-1 of Tetraodon nigroviridis (Spotted green pufferfish).